A 178-amino-acid chain; its full sequence is uncharacterized protein (178 aa).

Positions 1–23 (MNYSVIWAITILILGLVLTLAWA) are cleaved as a signal peptide.

This is an uncharacterized protein from Invertebrate iridescent virus 3 (IIV-3).